The following is a 285-amino-acid chain: N(G),N(G)-dimethylarginine dimethylaminohydrolase 1 (285 aa).

Position 2 is an N-acetylalanine (Ala-2). Substrate is bound by residues Leu-30, Asp-73, 78–79, Arg-98, and Arg-145; that span reads ED. Catalysis depends on His-173, which acts as the Proton donor. Cys-222 bears the S-nitrosocysteine mark. Residue Val-268 coordinates substrate. Position 274 is an S-nitrosocysteine (Cys-274). Cys-274 (nucleophile) is an active-site residue. A Zn(2+)-binding site is contributed by Cys-274.

It belongs to the DDAH family. As to quaternary structure, monomer. In terms of tissue distribution, detected in brain, liver, kidney and pancreas, and at low levels in skeletal muscle.

The enzyme catalyses N(omega),N(omega)-dimethyl-L-arginine + H2O = dimethylamine + L-citrulline. It carries out the reaction N(omega)-methyl-L-arginine + H2O = L-citrulline + methylamine. Inhibited by zinc ions. Enzyme purified in the absence of 1,10-phenanthroline contains on average 0.4 zinc atoms per subunit. Inhibited by 4-hydroxy-nonenal through the formation of a covalent adduct with His-173. Competitively inhibited by N(5)-iminopropyl-ornithine. Functionally, hydrolyzes N(G),N(G)-dimethyl-L-arginine (ADMA) and N(G)-monomethyl-L-arginine (MMA) which act as inhibitors of NOS. Has therefore a role in the regulation of nitric oxide generation. This Homo sapiens (Human) protein is N(G),N(G)-dimethylarginine dimethylaminohydrolase 1.